The primary structure comprises 469 residues: Dihydroorotate dehydrogenase (quinone), mitochondrial (469 aa).

The transit peptide at 1-37 directs the protein to the mitochondrion; the sequence is MSSSAAALAWRRSLRDALLRGSAWRGAPAANSAAARL. Residues 62–82 form a helical membrane-spanning segment; the sequence is LLTGAMIGLAIAGGAYVSTAD. Residues 150 to 154 and S174 each bind FMN; that span reads AGFDK. K154 lines the substrate pocket. 199–203 provides a ligand contact to substrate; the sequence is NRCGF. A disordered region spans residues 219–247; the sequence is HGKRKMEETSSSTSPTTSDVKQGGKAGPG. Residues 227-236 show a composition bias toward low complexity; that stretch reads TSSSTSPTTS. FMN-binding residues include N252 and N283. 283–288 is a substrate binding site; the sequence is NVSSPN. Residue S286 is the Nucleophile of the active site. The FMN site is built by K328 and S356. Substrate is bound at residue 357–358; it reads NT. Residues G380, G409, and 430–431 contribute to the FMN site; that span reads YT.

It belongs to the dihydroorotate dehydrogenase family. Type 2 subfamily. Requires FMN as cofactor.

It localises to the mitochondrion inner membrane. The enzyme catalyses (S)-dihydroorotate + a quinone = orotate + a quinol. It functions in the pathway pyrimidine metabolism; UMP biosynthesis via de novo pathway; orotate from (S)-dihydroorotate (quinone route): step 1/1. Functionally, catalyzes the conversion of dihydroorotate to orotate with quinone as electron acceptor. The chain is Dihydroorotate dehydrogenase (quinone), mitochondrial (PYRD) from Oryza sativa subsp. japonica (Rice).